A 149-amino-acid polypeptide reads, in one-letter code: MRAVVQRVTKASVSVDGKIVGQIEKGIVVLLGVGKDDNIDDTKYLAEKIVNLRIFDDNDGKMNLSLLDVQGSALIISQFTLYGDCRRGRRPSYSDSANPELAKELYEKFIELVRGYGVHVETGIFAAYMQVEIHNDGPVTLLLDSKKVF.

Residues 137–138 (GP) carry the Gly-cisPro motif, important for rejection of L-amino acids motif.

Belongs to the DTD family. Homodimer.

The protein localises to the cytoplasm. The catalysed reaction is glycyl-tRNA(Ala) + H2O = tRNA(Ala) + glycine + H(+). It catalyses the reaction a D-aminoacyl-tRNA + H2O = a tRNA + a D-alpha-amino acid + H(+). Its function is as follows. An aminoacyl-tRNA editing enzyme that deacylates mischarged D-aminoacyl-tRNAs. Also deacylates mischarged glycyl-tRNA(Ala), protecting cells against glycine mischarging by AlaRS. Acts via tRNA-based rather than protein-based catalysis; rejects L-amino acids rather than detecting D-amino acids in the active site. By recycling D-aminoacyl-tRNA to D-amino acids and free tRNA molecules, this enzyme counteracts the toxicity associated with the formation of D-aminoacyl-tRNA entities in vivo and helps enforce protein L-homochirality. This is D-aminoacyl-tRNA deacylase from Fervidobacterium nodosum (strain ATCC 35602 / DSM 5306 / Rt17-B1).